The primary structure comprises 494 residues: Cobyric acid synthase (494 aa).

Residues 254–453 (KQTVAVIAYP…LHGLFEDPGA (200 aa)) form the GATase cobBQ-type domain. The active-site Nucleophile is the Cys-338. The active site involves His-445.

It belongs to the CobB/CobQ family. CobQ subfamily.

Its pathway is cofactor biosynthesis; adenosylcobalamin biosynthesis. Its function is as follows. Catalyzes amidations at positions B, D, E, and G on adenosylcobyrinic A,C-diamide. NH(2) groups are provided by glutamine, and one molecule of ATP is hydrogenolyzed for each amidation. The polypeptide is Cobyric acid synthase (Albidiferax ferrireducens (strain ATCC BAA-621 / DSM 15236 / T118) (Rhodoferax ferrireducens)).